The chain runs to 1852 residues: Voltage-dependent L-type calcium channel subunit alpha-1S (1852 aa).

The disordered stretch occupies residues methionine 1–isoleucine 23. Residues methionine 1–lysine 51 lie on the Cytoplasmic side of the membrane. Residues asparagine 38–phenylalanine 337 form an I repeat. The chain crosses the membrane as a helical span at residues proline 52–valine 70. The Extracellular portion of the chain corresponds to tyrosine 71 to glycine 85. Asparagine 79 carries an N-linked (GlcNAc...) asparagine glycan. The helical transmembrane segment at leucine 86–isoleucine 106 threads the bilayer. The Cytoplasmic segment spans residues alanine 107–aspartate 115. The chain crosses the membrane as a helical span at residues alanine 116–threonine 136. The Extracellular segment spans residues valine 137–aspartate 160. Residues valine 161–valine 179 traverse the membrane as a helical segment. Residues proline 180–leucine 196 are Cytoplasmic-facing. The helical transmembrane segment at phenylalanine 197–phenylalanine 218 threads the bilayer. The Extracellular portion of the chain corresponds to lysine 219–glycine 279. Intrachain disulfides connect cysteine 226/cysteine 254 and cysteine 245/cysteine 261. The N-linked (GlcNAc...) asparagine glycan is linked to asparagine 257. An intramembrane region (pore-forming) is located at residues phenylalanine 280–valine 301. The Selectivity filter of repeat I motif lies at serine 290–glycine 293. Glutamate 292 is a Ca(2+) binding site. The Extracellular portion of the chain corresponds to asparagine 302–tryptophan 309. Residues proline 310–leucine 330 traverse the membrane as a helical segment. Topologically, residues glycine 331–lysine 432 are cytoplasmic. A binding to the beta subunit region spans residues glutamine 357 to glutamate 374. 2 positions are modified to phosphoserine: serine 393 and serine 397. Residues asparagine 418–leucine 664 form an II repeat. A helical transmembrane segment spans residues valine 433–serine 451. The Extracellular segment spans residues glutamate 452–histidine 462. A helical membrane pass occupies residues leucine 463 to methionine 483. Residues tyrosine 484–serine 494 are Cytoplasmic-facing. Residues isoleucine 495–valine 514 traverse the membrane as a helical segment. Over glutamate 515–glycine 523 the chain is Extracellular. Residues isoleucine 524 to tryptophan 542 form a helical membrane-spanning segment. Residues threonine 543–serine 561 lie on the Cytoplasmic side of the membrane. Residues leucine 562–phenylalanine 581 traverse the membrane as a helical segment. Residues glycine 582–proline 601 are Extracellular-facing. The segment at residues glutamine 602–glycine 623 is an intramembrane region (pore-forming). The short motif at threonine 612–aspartate 615 is the Selectivity filter of repeat II element. Residue glutamate 614 coordinates Ca(2+). Residues isoleucine 624–proline 633 lie on the Extracellular side of the membrane. Residues glycine 634–leucine 653 form a helical membrane-spanning segment. Residues asparagine 654 to threonine 799 lie on the Cytoplasmic side of the membrane. 2 disordered regions span residues lysine 675–glutamate 712 and glutamate 731–arginine 757. Phosphoserine; by PKA is present on serine 687. Basic and acidic residues predominate over residues leucine 690–glycine 711. The segment covering proline 742–glutamate 751 has biased composition (acidic residues). The III repeat unit spans residues glutamate 768–phenylalanine 1068. The helical transmembrane segment at tryptophan 800–alanine 818 threads the bilayer. The Extracellular segment spans residues glutamate 819–glutamine 830. The chain crosses the membrane as a helical span at residues isoleucine 831–lysine 850. The Cytoplasmic segment spans residues methionine 851–asparagine 866. Residues tyrosine 867–leucine 885 traverse the membrane as a helical segment. Residues glutamate 886 to valine 892 lie on the Extracellular side of the membrane. Residues valine 893–alanine 911 form a helical membrane-spanning segment. The Cytoplasmic segment spans residues lysine 912–asparagine 930. A helical membrane pass occupies residues isoleucine 931–phenylalanine 950. Residues lysine 951–valine 1000 lie on the Extracellular side of the membrane. Cysteine 957 and cysteine 968 are joined by a disulfide. Residues arginine 988 to lysine 1077 form a dihydropyridine binding region. The segment at residues leucine 1001–tyrosine 1021 is an intramembrane region (pore-forming). The Selectivity filter of repeat III signature appears at threonine 1012 to glycine 1015. Glutamate 1014 lines the Ca(2+) pocket. Topologically, residues lysine 1022–arginine 1038 are extracellular. A helical membrane pass occupies residues valine 1039–phenylalanine 1060. Residues valine 1061–serine 1118 lie on the Cytoplasmic side of the membrane. One copy of the IV repeat lies at asparagine 1105–phenylalanine 1384. Residues tyrosine 1119–tyrosine 1140 traverse the membrane as a helical segment. N-linked (GlcNAc...) asparagine glycosylation is present at asparagine 1141. Over asparagine 1141–histidine 1148 the chain is Extracellular. The helical transmembrane segment at isoleucine 1149 to isoleucine 1170 threads the bilayer. Residues alanine 1171–aspartate 1180 are Cytoplasmic-facing. A helical transmembrane segment spans residues proline 1181–serine 1200. The Extracellular portion of the chain corresponds to glutamate 1201–serine 1231. A helical membrane pass occupies residues serine 1232 to alanine 1250. Topologically, residues glutamate 1251–proline 1268 are cytoplasmic. The chain crosses the membrane as a helical span at residues tyrosine 1269–phenylalanine 1289. Residues glycine 1290 to glutamine 1311 are Extracellular-facing. An intramembrane region (pore-forming) is located at residues alanine 1312 to leucine 1330. The short motif at threonine 1321–alanine 1324 is the Selectivity filter of repeat IV element. Over alanine 1331–phenylalanine 1356 the chain is Extracellular. Positions leucine 1337–lysine 1403 are dihydropyridine binding. Residues cysteine 1338 and cysteine 1352 are joined by a disulfide bond. Phenylalkylamine binding regions lie at residues glutamate 1349 to tryptophan 1391 and glutamate 1349 to serine 1392. Residues alanine 1357–methionine 1381 traverse the membrane as a helical segment. Topologically, residues aspartate 1382–proline 1852 are cytoplasmic. The tract at residues lysine 1522 to glutamate 1542 is interaction with calmodulin. The residue at position 1575 (serine 1575) is a Phosphoserine; by PKA and CAMK2. The residue at position 1579 (threonine 1579) is a Phosphothreonine. Phosphoserine; by PKA is present on serine 1617. 2 disordered regions span residues glycine 1702–lysine 1721 and threonine 1727–arginine 1762. Residues lysine 1747 to lysine 1757 show a composition bias toward basic and acidic residues.

The protein belongs to the calcium channel alpha-1 subunit (TC 1.A.1.11) family. CACNA1S subfamily. In terms of assembly, component of a calcium channel complex consisting of a pore-forming alpha subunit (CACNA1S) and the ancillary subunits CACNB1 or CACNB2, CACNG1 and CACNA2D1. The channel complex contains alpha, beta, gamma and delta subunits in a 1:1:1:1 ratio, i.e. it contains either CACNB1 or CACNB2. CACNA1S channel activity is modulated by the auxiliary subunits (CACNB1 or CACNB2, CACNG1 and CACNA2D1). Interacts with DYSF and JSRP1. Interacts with RYR1. Interacts with STAC, STAC2 and STAC3 (via their SH3 domains). Interacts with CALM. In terms of processing, the alpha-1S subunit is found in two isoforms in the skeletal muscle: a minor form of 212 kDa containing the complete amino acid sequence, and a major form of 190 kDa derived from the full-length form by post-translational proteolysis close to Phe-1690. Phosphorylated. Phosphorylation by PKA activates the calcium channel. Both the minor and major forms are phosphorylated in vitro by PKA. Phosphorylation at Ser-1575 is involved in beta-adrenergic-mediated regulation of the channel.

The protein resides in the cell membrane. It is found in the sarcolemma. The protein localises to the T-tubule. It catalyses the reaction Ca(2+)(in) = Ca(2+)(out). With respect to regulation, channel activity is blocked by dihydropyridines (DHP), phenylalkylamines, and by benzothiazepines. Its function is as follows. Pore-forming, alpha-1S subunit of the voltage-gated calcium channel that gives rise to L-type calcium currents in skeletal muscle. Calcium channels containing the alpha-1S subunit play an important role in excitation-contraction coupling in skeletal muscle via their interaction with RYR1, which triggers Ca(2+) release from the sarcplasmic reticulum and ultimately results in muscle contraction. Long-lasting (L-type) calcium channels belong to the 'high-voltage activated' (HVA) group. The polypeptide is Voltage-dependent L-type calcium channel subunit alpha-1S (Cacna1s) (Mus musculus (Mouse)).